We begin with the raw amino-acid sequence, 305 residues long: N-acetylneuraminate lyase A (305 aa).

Residues Thr51 and Thr52 each contribute to the aceneuramate site. Tyr143 serves as the catalytic Proton donor. Lys173 (schiff-base intermediate with substrate) is an active-site residue. Positions 175, 197, 199, 200, and 216 each coordinate aceneuramate.

Belongs to the DapA family. NanA subfamily. As to quaternary structure, homotetramer.

It localises to the cytoplasm. The enzyme catalyses aceneuramate = aldehydo-N-acetyl-D-mannosamine + pyruvate. Its pathway is amino-sugar metabolism; N-acetylneuraminate degradation. Its function is as follows. Catalyzes the cleavage of N-acetylneuraminic acid (sialic acid) to form pyruvate and N-acetylmannosamine via a Schiff base intermediate. It prevents sialic acids from being recycled and returning to the cell surface. Involved in the N-glycolylneuraminic acid (Neu5Gc) degradation pathway. The chain is N-acetylneuraminate lyase A (npl-a) from Xenopus laevis (African clawed frog).